The primary structure comprises 798 residues: Integrin beta-5 (798 aa).

Residues 1-23 (MPRVPATLYACLLGLCALVPRLA) form the signal peptide. At 24 to 719 (GLNICTSGSA…REPECGSAPN (696 aa)) the chain is on the extracellular side. One can recognise a PSI domain in the interval 27–76 (ICTSGSATSCEECLLIHPKCAWCSKEYFGNPRSITSRCDLKANLIRNGCE). 19 disulfide bridges follow: cysteine 28–cysteine 46, cysteine 36–cysteine 463, cysteine 39–cysteine 64, cysteine 49–cysteine 75, cysteine 202–cysteine 211, cysteine 259–cysteine 300, cysteine 401–cysteine 413, cysteine 433–cysteine 461, cysteine 465–cysteine 484, cysteine 476–cysteine 487, cysteine 489–cysteine 498, cysteine 500–cysteine 530, cysteine 513–cysteine 528, cysteine 522–cysteine 533, cysteine 535–cysteine 548, cysteine 550–cysteine 571, cysteine 555–cysteine 569, cysteine 563–cysteine 574, and cysteine 576–cysteine 585. The VWFA domain maps to 136–378 (YPVDLYYLMD…QLIINAYSSI (243 aa)). Mg(2+) contacts are provided by serine 147 and serine 149. Ca(2+) contacts are provided by serine 149, aspartate 152, aspartate 153, and aspartate 184. Ca(2+)-binding residues include asparagine 242, aspartate 244, proline 246, and glutamate 247. Glutamate 247 contributes to the Mg(2+) binding site. Asparagine 347 is a glycosylation site (N-linked (GlcNAc...) asparagine). Glycine 362 contributes to the Ca(2+) binding site. 2 N-linked (GlcNAc...) asparagine glycosylation sites follow: asparagine 460 and asparagine 479. 4 consecutive I-EGF domains span residues 465 to 499 (CSTGLEPNSARCSGNGTYTCGLCECDPGYLGTRCE), 500 to 549 (CQEG…PFCE), 550 to 586 (CDSFSCARNKGVLCSGHGECHCGECKCHAGYIGDNCN), and 587 to 626 (CSTDVSTCKAKDGQICSDRGRCVCGQCQCTEPGAFGETCE). N-linked (GlcNAc...) asparagine glycosylation is present at asparagine 505. A glycan (N-linked (GlcNAc...) asparagine) is linked at asparagine 586. 9 disulfide bridges follow: cysteine 587–cysteine 610, cysteine 594–cysteine 608, cysteine 602–cysteine 613, cysteine 615–cysteine 625, cysteine 628–cysteine 631, cysteine 635–cysteine 682, cysteine 641–cysteine 661, cysteine 644–cysteine 657, and cysteine 690–cysteine 714. Residues asparagine 654 and asparagine 705 are each glycosylated (N-linked (GlcNAc...) asparagine). A helical membrane pass occupies residues 720-742 (AMTILLAVVGSILLIGMALLAIW). Over 743-798 (KLLVTIHDRREFAKFQSERSRARYEMASNPLYRKPISTHTVDFAFNKFNKSYNGSV) the chain is Cytoplasmic. At serine 770 the chain carries Phosphoserine.

The protein belongs to the integrin beta chain family. In terms of assembly, heterodimer of an alpha and a beta subunit. Beta-5 (ITGB5) associates with alpha-V (ITGAV). Interacts with MYO10. Interacts with DAB2. Integrin ITGAV:ITGB5 interacts with FBLN5 (via N-terminus). ITGAV:ITGB5 interacts with CCN3. Interacts with tensin TNS3; TNS3 also interacts with PEAK1, thus acting as an adapter molecule to bridge the association of PEAK1 with ITGB5.

The protein localises to the cell membrane. Integrin alpha-V/beta-5 (ITGAV:ITGB5) is a receptor for fibronectin. It recognizes the sequence R-G-D in its ligand. This is Integrin beta-5 (Itgb5) from Mus musculus (Mouse).